The chain runs to 309 residues: Porphobilinogen deaminase (309 aa).

C234 is subject to S-(dipyrrolylmethanemethyl)cysteine.

This sequence belongs to the HMBS family. As to quaternary structure, monomer. It depends on dipyrromethane as a cofactor.

It carries out the reaction 4 porphobilinogen + H2O = hydroxymethylbilane + 4 NH4(+). It participates in porphyrin-containing compound metabolism; protoporphyrin-IX biosynthesis; coproporphyrinogen-III from 5-aminolevulinate: step 2/4. Functionally, tetrapolymerization of the monopyrrole PBG into the hydroxymethylbilane pre-uroporphyrinogen in several discrete steps. The protein is Porphobilinogen deaminase (hemC) of Mycobacterium bovis (strain ATCC BAA-935 / AF2122/97).